The primary structure comprises 193 residues: Holliday junction branch migration complex subunit RuvA (193 aa).

The interval 1 to 64 is domain I; sequence MIGRIAGILL…EDAHLLYGFL (64 aa). A domain II region spans residues 65 to 139; that stretch reads TQQERTTFRE…GKLGADLGAL (75 aa). Positions 139-143 are flexible linker; the sequence is LAGAA. A domain III region spans residues 144–193; that stretch reads SPSDHATDILNALLALGYSEKEGLAAIKNVPAGTGVSEGIKLALKALSKA.

The protein belongs to the RuvA family. As to quaternary structure, homotetramer. Forms an RuvA(8)-RuvB(12)-Holliday junction (HJ) complex. HJ DNA is sandwiched between 2 RuvA tetramers; dsDNA enters through RuvA and exits via RuvB. An RuvB hexamer assembles on each DNA strand where it exits the tetramer. Each RuvB hexamer is contacted by two RuvA subunits (via domain III) on 2 adjacent RuvB subunits; this complex drives branch migration. In the full resolvosome a probable DNA-RuvA(4)-RuvB(12)-RuvC(2) complex forms which resolves the HJ.

It localises to the cytoplasm. Its function is as follows. The RuvA-RuvB-RuvC complex processes Holliday junction (HJ) DNA during genetic recombination and DNA repair, while the RuvA-RuvB complex plays an important role in the rescue of blocked DNA replication forks via replication fork reversal (RFR). RuvA specifically binds to HJ cruciform DNA, conferring on it an open structure. The RuvB hexamer acts as an ATP-dependent pump, pulling dsDNA into and through the RuvAB complex. HJ branch migration allows RuvC to scan DNA until it finds its consensus sequence, where it cleaves and resolves the cruciform DNA. This is Holliday junction branch migration complex subunit RuvA from Burkholderia cenocepacia (strain ATCC BAA-245 / DSM 16553 / LMG 16656 / NCTC 13227 / J2315 / CF5610) (Burkholderia cepacia (strain J2315)).